A 134-amino-acid chain; its full sequence is Large-conductance mechanosensitive channel (134 aa).

Transmembrane regions (helical) follow at residues 16-36 (VIDL…VTAL) and 84-104 (INTL…IKVI).

The protein belongs to the MscL family. Homopentamer.

The protein resides in the cell inner membrane. Channel that opens in response to stretch forces in the membrane lipid bilayer. May participate in the regulation of osmotic pressure changes within the cell. The sequence is that of Large-conductance mechanosensitive channel from Stenotrophomonas maltophilia (strain R551-3).